The primary structure comprises 437 residues: Enolase 1 (437 aa).

Lys60 is covalently cross-linked (Glycyl lysine isopeptide (Lys-Gly) (interchain with G-Cter in ubiquitin)). A phosphoserine mark is found at Ser119 and Ser138. Substrate contacts are provided by His160 and Glu169. Ser188 bears the Phosphoserine mark. Catalysis depends on Glu212, which acts as the Proton donor. Lys243 participates in a covalent cross-link: Glycyl lysine isopeptide (Lys-Gly) (interchain with G-Cter in ubiquitin). Mg(2+) contacts are provided by Asp247 and Glu296. Substrate is bound at residue Glu296. Residue Thr313 is modified to Phosphothreonine. Substrate is bound at residue Asp321. A Mg(2+)-binding site is contributed by Asp321. Thr324 carries the phosphothreonine modification. Catalysis depends on Lys346, which acts as the Proton acceptor. Lys358 participates in a covalent cross-link: Glycyl lysine isopeptide (Lys-Gly) (interchain with G-Cter in ubiquitin). Residues 373–376 and Lys397 contribute to the substrate site; that span reads SHRS.

The protein belongs to the enolase family. As to quaternary structure, homodimer. Mg(2+) serves as cofactor.

It localises to the cytoplasm. The catalysed reaction is (2R)-2-phosphoglycerate = phosphoenolpyruvate + H2O. The protein operates within carbohydrate degradation; glycolysis; pyruvate from D-glyceraldehyde 3-phosphate: step 4/5. In Saccharomyces cerevisiae (strain ATCC 204508 / S288c) (Baker's yeast), this protein is Enolase 1 (ENO1).